The chain runs to 357 residues: N-acetyl-gamma-glutamyl-phosphate reductase (357 aa).

Cysteine 160 is a catalytic residue.

Belongs to the NAGSA dehydrogenase family. Type 1 subfamily.

Its subcellular location is the cytoplasm. The catalysed reaction is N-acetyl-L-glutamate 5-semialdehyde + phosphate + NADP(+) = N-acetyl-L-glutamyl 5-phosphate + NADPH + H(+). Its pathway is amino-acid biosynthesis; L-arginine biosynthesis; N(2)-acetyl-L-ornithine from L-glutamate: step 3/4. Functionally, catalyzes the NADPH-dependent reduction of N-acetyl-5-glutamyl phosphate to yield N-acetyl-L-glutamate 5-semialdehyde. This Synechococcus sp. (strain CC9605) protein is N-acetyl-gamma-glutamyl-phosphate reductase.